The primary structure comprises 147 residues: NAD(P)H-quinone oxidoreductase subunit N (147 aa).

This sequence belongs to the complex I NdhN subunit family. NDH-1 can be composed of about 15 different subunits; different subcomplexes with different compositions have been identified which probably have different functions.

It localises to the cellular thylakoid membrane. It catalyses the reaction a plastoquinone + NADH + (n+1) H(+)(in) = a plastoquinol + NAD(+) + n H(+)(out). The enzyme catalyses a plastoquinone + NADPH + (n+1) H(+)(in) = a plastoquinol + NADP(+) + n H(+)(out). NDH-1 shuttles electrons from an unknown electron donor, via FMN and iron-sulfur (Fe-S) centers, to quinones in the respiratory and/or the photosynthetic chain. The immediate electron acceptor for the enzyme in this species is believed to be plastoquinone. Couples the redox reaction to proton translocation, and thus conserves the redox energy in a proton gradient. Cyanobacterial NDH-1 also plays a role in inorganic carbon-concentration. The protein is NAD(P)H-quinone oxidoreductase subunit N of Synechococcus sp. (strain JA-3-3Ab) (Cyanobacteria bacterium Yellowstone A-Prime).